The chain runs to 248 residues: Ubiquinone/menaquinone biosynthesis C-methyltransferase UbiE (248 aa).

Residues S68 and D92 each contribute to the S-adenosyl-L-methionine site.

This sequence belongs to the class I-like SAM-binding methyltransferase superfamily. MenG/UbiE family.

It catalyses the reaction a 2-demethylmenaquinol + S-adenosyl-L-methionine = a menaquinol + S-adenosyl-L-homocysteine + H(+). It carries out the reaction a 2-methoxy-6-(all-trans-polyprenyl)benzene-1,4-diol + S-adenosyl-L-methionine = a 5-methoxy-2-methyl-3-(all-trans-polyprenyl)benzene-1,4-diol + S-adenosyl-L-homocysteine + H(+). The protein operates within quinol/quinone metabolism; menaquinone biosynthesis; menaquinol from 1,4-dihydroxy-2-naphthoate: step 2/2. It participates in cofactor biosynthesis; ubiquinone biosynthesis. Methyltransferase required for the conversion of demethylmenaquinol (DMKH2) to menaquinol (MKH2) and the conversion of 2-polyprenyl-6-methoxy-1,4-benzoquinol (DDMQH2) to 2-polyprenyl-3-methyl-6-methoxy-1,4-benzoquinol (DMQH2). The protein is Ubiquinone/menaquinone biosynthesis C-methyltransferase UbiE of Rickettsia massiliae (strain Mtu5).